The following is a 217-amino-acid chain: Probable lipoprotein CPn_0875/CP_0994/CPj0875/CpB0904 (217 aa).

A signal peptide spans 1–21 (MKRVIYKTIFCGLTLLTSLSS). A lipid anchor (N-palmitoyl cysteine) is attached at Cys22. Cys22 carries the S-diacylglycerol cysteine lipid modification.

It belongs to the chlamydial CPn_0875/CT_734/TC_0107 family.

The protein localises to the cell membrane. The sequence is that of Probable lipoprotein CPn_0875/CP_0994/CPj0875/CpB0904 from Chlamydia pneumoniae (Chlamydophila pneumoniae).